We begin with the raw amino-acid sequence, 375 residues long: Actin-binding Rho-activating protein (375 aa).

Residues 37 to 101 (ANENSTRQAQ…ATEVSHIKRK (65 aa)) are disordered. The segment covering 80 to 101 (PDGDREGRGSEEATEVSHIKRK) has biased composition (basic and acidic residues). Residues Ser-150 and Ser-182 each carry the phosphoserine modification. The tract at residues 175–197 (EPKWKSDSIDTEDSGYGGDMEER) is disordered. 2 actin-binding regions span residues 193 to 293 (DMEE…AERA) and 294 to 375 (KRAE…TLLE). 2 interaction with actin regions span residues 234 to 279 (SQVD…GDEG) and 346 to 375 (MRARKHGLVHFEGEMLWQGKDDHVVITLLE).

In terms of assembly, binds F-actin and ABLIM1, ABLIM2 and ABLIM3. Interaction with ABLIM2 and ABLIM3 enhances activity. Predominantly expressed in heart and skeletal muscle, and expressed at lower levels in adrenal gland, brain, kidney, liver, and testis.

The protein resides in the cytoplasm. The protein localises to the myofibril. It localises to the sarcomere. It is found in the cytoskeleton. In terms of biological role, acts as an activator of serum response factor (SRF)-dependent transcription possibly by inducing nuclear translocation of MKL1 or MKL2 and through a mechanism requiring Rho-actin signaling. The polypeptide is Actin-binding Rho-activating protein (Rattus norvegicus (Rat)).